Reading from the N-terminus, the 63-residue chain is MSPYSILFVVVIALCLLPESIVGVCWDTGCQLNAWAVRGCAQYGMRDVNMKSCSGGIIYTCCD.

Residues 1-23 (MSPYSILFVVVIALCLLPESIVG) form the signal peptide. Cystine bridges form between Cys15–Cys62, Cys25–Cys53, and Cys30–Cys61.

Hemolymph (at protein level). Also weakly expressed by the venom gland (at protein level).

It is found in the secreted. Its function is as follows. Toxin with insecticidal activity. High doses of recombinant toxin causes impaired motor behavior of D.melanogaster, which progress slowly to paralysis and death after several hours. The sequence is that of Venom peptide U-reduvitoxin-Pp19 from Pristhesancus plagipennis (Common assassin bug).